Reading from the N-terminus, the 801-residue chain is Phenylalanine--tRNA ligase beta subunit (801 aa).

Positions alanine 39–phenylalanine 153 constitute a tRNA-binding domain. Residues threonine 406–threonine 481 enclose the B5 domain. Residues aspartate 459, aspartate 465, glutamate 468, and glutamate 469 each contribute to the Mg(2+) site. The region spanning threonine 708–arginine 801 is the FDX-ACB domain.

This sequence belongs to the phenylalanyl-tRNA synthetase beta subunit family. Type 1 subfamily. Tetramer of two alpha and two beta subunits. Mg(2+) serves as cofactor.

It localises to the cytoplasm. The enzyme catalyses tRNA(Phe) + L-phenylalanine + ATP = L-phenylalanyl-tRNA(Phe) + AMP + diphosphate + H(+). The protein is Phenylalanine--tRNA ligase beta subunit of Streptococcus mutans serotype c (strain ATCC 700610 / UA159).